The sequence spans 103 residues: UPF0145 protein pXO2-45/BXB0052/GBAA_pXO2_0052 (103 aa).

Belongs to the UPF0145 family.

This is UPF0145 protein pXO2-45/BXB0052/GBAA_pXO2_0052 from Bacillus anthracis.